The chain runs to 1064 residues: Adenylate cyclase type 4 (1064 aa).

The Cytoplasmic portion of the chain corresponds to 1 to 28; sequence MARLFSPRPPPSEDLFYETYYSLSQQYP. A run of 6 helical transmembrane segments spans residues 29–50, 61–80, 94–117, 120–138, 141–162, and 170–190; these read LLIL…VAWA, FLTT…GLAS, GLIW…VSAW, VSFF…PLGM, AAAA…YLGW, and LLPQ…VGAY. At 191-582 the chain is on the cytoplasmic side; sequence HKALMERALR…YRLSALPAFK (392 aa). Mg(2+) contacts are provided by D278, I279, and D322. ATP is bound by residues 278-283, 320-322, and R366; these read DIVGFT and LGD. Residues 498–523 form a disordered region; sequence DSPASTSTPLPEKAFSPQWSLDRSRT. Phosphoserine is present on S517. T533 bears the Phosphothreonine mark. The next 3 helical transmembrane spans lie at 583 to 604, 608 to 630, and 661 to 684; these read YYAA…LVTT, ALAT…CFSE, and VALG…FLPV. The Extracellular segment spans residues 685–707; it reads SSDCPFLAPNVSSVAFNTSWELP. N-linked (GlcNAc...) asparagine glycosylation is found at N694 and N701. Transmembrane regions (helical) follow at residues 708-733, 741-761, and 788-804; these read ASLP…SLFL, LLLL…SHAW, and MGAI…LVLA. Over 805 to 1064 the chain is Cytoplasmic; it reads RQNEYYCRLD…LTRTGSPSAS (260 aa). Residues K914, 994-996, 1001-1005, and K1041 contribute to the ATP site; these read DIW and NVASR.

Belongs to the adenylyl cyclase class-4/guanylyl cyclase family. Requires Mg(2+) as cofactor. The cofactor is Mn(2+). As to expression, widely distributed.

It localises to the cell membrane. It is found in the cytoplasm. It catalyses the reaction ATP = 3',5'-cyclic AMP + diphosphate. Activated by forskolin. Insensitive to calcium/calmodulin. Stimulated by GNAS and by the G-protein beta and gamma subunit complex. Its function is as follows. Catalyzes the formation of the signaling molecule cAMP in response to G-protein signaling. The protein is Adenylate cyclase type 4 (Adcy4) of Rattus norvegicus (Rat).